A 123-amino-acid chain; its full sequence is Large ribosomal subunit protein bL12 (123 aa).

It belongs to the bacterial ribosomal protein bL12 family. In terms of assembly, homodimer. Part of the ribosomal stalk of the 50S ribosomal subunit. Forms a multimeric L10(L12)X complex, where L10 forms an elongated spine to which 2 to 4 L12 dimers bind in a sequential fashion. Binds GTP-bound translation factors.

In terms of biological role, forms part of the ribosomal stalk which helps the ribosome interact with GTP-bound translation factors. Is thus essential for accurate translation. This chain is Large ribosomal subunit protein bL12, found in Aliarcobacter butzleri (strain RM4018) (Arcobacter butzleri).